The primary structure comprises 944 residues: MDQNGASGSRPNRLSQGKEAYACERSATVSAAADRSNIINEMAKICEADRQTSAIARRTQVHERLAVANSDFVAVEDLILAYAEPTPEDQVEMIMRDFCSSPTYEEDEDEPSYESEPWFRFRNKRIRTYSRKRDPKSYMAVRTEKSSGTSGLSVQRDLNTSSTSVACDFDAASSQKIHEVLLNLSQYFSATAKASSPTPVPSQIDLPTEARQDSGDECFNAEVENLRDDLLQNGFTFEASIYDNEHEQEDSGKFNVCSDADSTPKKTDVEIAEHKKHLKGPTQAEHVGKEENTNFILEGIPLSEWLTPMEPPKISKDVIKNIPDKKVKLEPSSQKEQKSSKDSNESKIRAASCDITKKNEGTTVLDQPNAAQQENLSNDGDLLEEFLFNEWHPMQCSNGPSTSNDAIKVPKEEINSIKRNDEEQPEKETPNKSRSTSSHQLSFRKTFLKFIEISGEMKIKGEKFVEKVVSGLHHPSHKCNLRTEEYSDNHSQVMESTQRVEFKSALSKPIELLDEKETYDMLAKVEVGEINGKCSPLNNETIAEPEFCGFRTASNKAIPISEKMKIKTAEFMAEFQSKETNHQNDYLVNQPNDNSTSVGRDTAFKKSIEISEEMPTKASKLVVVDTTLGEPHQPKIDPVCSDLNESQFFGFRTASNKAIEITEAMEKRGAMFLAQSRATDQQAEWQPSDFPDIPHTSPKNEIHSINVENTKAVHTKTASETEFFGFRTASNKGIVISENTKKKVAQFMSEFQAADASTDSNKPIVISEESRNIAAKFVDEAATEDSPNKPTFCNVQSQENPLDIEHFKHDLFVERSAKEEHPLCSQPLVRTPRRSQEIHSSLSQLAGQSPLDQATKKSVIARRNLLSLKRKRKIVSSTETSTSCASPAMERFAPKPSSTSTPLADRDLNRSKDCAKNRQDAEDMSPICMQPKKSRRLGLSRSRY.

Basic and acidic residues-rich tracts occupy residues Lys-325–Ile-348 and Asn-415–Asn-431. Disordered stretches follow at residues Lys-325–Asp-354 and Asn-415–Gln-440. 3 BRCA2 repeats span residues Ala-543 to Ser-577, Asn-644 to Ala-678, and Ser-719 to Ala-753. Disordered regions lie at residues Leu-823–Ala-854 and Ser-876–Tyr-944. 2 stretches are compositionally biased toward polar residues: residues Ile-838 to Asp-852 and Ser-876 to Ala-885. Positions Ala-904 to Ala-921 are enriched in basic and acidic residues. Over residues Lys-932 to Tyr-944 the composition is skewed to basic residues.

Interacts with Rad9 and spn-A/Rad51.

The protein resides in the nucleus. Involved in and required for double-strand break repair by meiotic and mitotic homologous recombination. During meiosis, has a dual role in the repair of meiotic double-stranded breaks and the efficient activation of the meiotic recombination checkpoint. This chain is Breast cancer type 2 susceptibility protein homolog, found in Drosophila simulans (Fruit fly).